A 323-amino-acid polypeptide reads, in one-letter code: Glutathione synthetase (323 aa).

The ATP-grasp domain occupies 133–317 (KMYALQFQSV…IGDQTIAALE (185 aa)). ATP is bound at residue 159 to 215 (LDELRAAVLKPLGGKAGEGILFLDPGDRNFNSLVEISTQQGQLPVMVQQYLPEAKDG). Glu288 and Asn290 together coordinate Mg(2+).

This sequence belongs to the prokaryotic GSH synthase family. It depends on Mg(2+) as a cofactor. The cofactor is Mn(2+).

It catalyses the reaction gamma-L-glutamyl-L-cysteine + glycine + ATP = glutathione + ADP + phosphate + H(+). It functions in the pathway sulfur metabolism; glutathione biosynthesis; glutathione from L-cysteine and L-glutamate: step 2/2. This chain is Glutathione synthetase, found in Synechococcus elongatus (strain ATCC 33912 / PCC 7942 / FACHB-805) (Anacystis nidulans R2).